Consider the following 569-residue polypeptide: MLO-like protein 10 (569 aa).

Residues 1–41 (MATRCFWCWTTLLFCSQLLTGFARASSAGGAKEKGLSQTPT) are Extracellular-facing. The helical transmembrane segment at 42–62 (WAVALVCTFFILVSVLLEKAL) threads the bilayer. The Cytoplasmic portion of the chain corresponds to 63–85 (HRVATWLWEKHKNSLLEALEKIK). The helical transmembrane segment at 86–106 (AELMILGFISLLLTFGEQYIL) threads the bilayer. Residues 107–163 (KICIPEKAAASMLPCPAPSTHDQDKTHRRRLAAATTSSRCDEGHEPLIPATGLHQLH) are Extracellular-facing. Residues 164-184 (ILLFFMAAFHILYSFITMMLG) form a helical membrane-spanning segment. Topologically, residues 185 to 286 (RLKIRGWKKW…IKRSLEDDFK (102 aa)) are cytoplasmic. A helical transmembrane segment spans residues 287–307 (VVVGISPLLWASFVIFLLLNV). Position 308 (Asn308) is a topological domain, extracellular. A helical membrane pass occupies residues 309–329 (GWEALFWASILPVLIILAVST). At 330-372 (KLQAILTRMALGITERHAVVQGIPLVHGSDKYFWFNRPQLLLH) the chain is on the cytoplasmic side. Residues 373–393 (LLHFALFQNAFQLTYFFWVWY) form a helical membrane-spanning segment. Over 394-413 (SFGLKSCFHTDFKLVIVKLS) the chain is Extracellular. The helical transmembrane segment at 414 to 434 (LGVGALILCSYITLPLYALVT) threads the bilayer. Residues 435-569 (QMGSNMKKAV…VKNVPANDID (135 aa)) lie on the Cytoplasmic side of the membrane. The calmodulin-binding stretch occupies residues 447–468 (EQMAKALKKWHMTVKKKKGKAR).

It belongs to the MLO family.

It is found in the membrane. May be involved in modulation of pathogen defense and leaf cell death. Activity seems to be regulated by Ca(2+)-dependent calmodulin binding and seems not to require heterotrimeric G proteins. This chain is MLO-like protein 10 (MLO10), found in Arabidopsis thaliana (Mouse-ear cress).